Consider the following 575-residue polypeptide: Muellerian-inhibiting factor (575 aa).

The first 24 residues, 1–24 (MPGPSLSLALVLSAMGALLRPGTP), serve as a signal peptide directing secretion. The propeptide occupies 25 to 466 (REEVFSTSAL…ERSGSARAQR (442 aa)). N78 and N344 each carry an N-linked (GlcNAc...) asparagine glycan. 3 disulfide bridges follow: C477–C541, C503–C572, and C507–C574.

Belongs to the TGF-beta family. Homodimer; disulfide-linked. In terms of processing, preproprotein is proteolytically processed to generate N- and C-terminal cleavage products that homodimerize and associate to form a biologically active non-covalent complex. Binding of the non-covalent complex to AMHR2 induces dissociation of the pro-region from the mature C-terminal dimer. The N-terminal portion of the protein, despite having no intrinsic activity, has the role of amplifying the activity of the C-terminus. Expressed in fetal testis and adult ovaries.

The protein resides in the secreted. In terms of biological role, plays an important role in several reproductive functions. Induces Muellerian duct regression during male fetal sexual differentiation and plays a role in Leydig cell differentiation and function. In female acts as a negative regulator of the primordial to primary follicle transition and decreases FSH sensitivity of growing follicles. AMH signals by binding to a specific type-II receptor, AMHR2, that heterodimerizes with type-I receptors (ACVR1 and BMPR1A), and recruiting SMAD proteins that are translocated to the nucleus to regulate target gene expression. This chain is Muellerian-inhibiting factor (AMH), found in Bos taurus (Bovine).